Reading from the N-terminus, the 275-residue chain is Bis(5'-nucleosyl)-tetraphosphatase, symmetrical (275 aa).

Belongs to the Ap4A hydrolase family.

It catalyses the reaction P(1),P(4)-bis(5'-adenosyl) tetraphosphate + H2O = 2 ADP + 2 H(+). Its function is as follows. Hydrolyzes diadenosine 5',5'''-P1,P4-tetraphosphate to yield ADP. This is Bis(5'-nucleosyl)-tetraphosphatase, symmetrical from Actinobacillus succinogenes (strain ATCC 55618 / DSM 22257 / CCUG 43843 / 130Z).